Reading from the N-terminus, the 214-residue chain is Ubiquitin-conjugating enzyme E2 21 (214 aa).

The 148-residue stretch at Ala21–Asn168 folds into the UBC core domain. Cys106 acts as the Glycyl thioester intermediate in catalysis. In terms of domain architecture, UBA spans Asp172–Asp214.

It belongs to the ubiquitin-conjugating enzyme family.

The catalysed reaction is S-ubiquitinyl-[E1 ubiquitin-activating enzyme]-L-cysteine + [E2 ubiquitin-conjugating enzyme]-L-cysteine = [E1 ubiquitin-activating enzyme]-L-cysteine + S-ubiquitinyl-[E2 ubiquitin-conjugating enzyme]-L-cysteine.. It functions in the pathway protein modification; protein ubiquitination. Functionally, acts with E3 ubiquitin-protein ligase trim-21 to catalyze the 'Lys-48'-linked polyubiquitination of ced-1, promoting its proteasomal degradation to maintain appropriate ced-1 levels for apoptotic cell clearance. This chain is Ubiquitin-conjugating enzyme E2 21 (ubc-21), found in Caenorhabditis elegans.